The sequence spans 436 residues: Adenylosuccinate synthetase (436 aa).

Residues 13 to 19 (GDEGKGK) and 41 to 43 (GHT) contribute to the GTP site. The Proton acceptor role is filled by Asp14. Mg(2+) is bound by residues Asp14 and Gly41. Residues 14-17 (DEGK), 39-42 (NAGH), Thr130, Arg144, Gln225, Thr240, and Arg304 each bind IMP. The active-site Proton donor is the His42. 300–306 (ATTGRSR) is a binding site for substrate. Residues Arg306, 332–334 (KLD), and 415–417 (STG) each bind GTP.

It belongs to the adenylosuccinate synthetase family. As to quaternary structure, homodimer. The cofactor is Mg(2+).

Its subcellular location is the cytoplasm. The enzyme catalyses IMP + L-aspartate + GTP = N(6)-(1,2-dicarboxyethyl)-AMP + GDP + phosphate + 2 H(+). The protein operates within purine metabolism; AMP biosynthesis via de novo pathway; AMP from IMP: step 1/2. Functionally, plays an important role in the de novo pathway of purine nucleotide biosynthesis. Catalyzes the first committed step in the biosynthesis of AMP from IMP. The polypeptide is Adenylosuccinate synthetase (Hamiltonella defensa subsp. Acyrthosiphon pisum (strain 5AT)).